A 624-amino-acid polypeptide reads, in one-letter code: APC membrane recruitment protein 2 (624 aa).

Disordered regions lie at residues 77 to 111 (EEPCTNAGAGQLNTEKSPKVVTINPDVSSDSSVAK), 126 to 177 (ENVK…GLIL), 195 to 230 (PLCEKEKSEEDIPADVPSVEHSGDVNTSAEENPLNG), 342 to 369 (ADQDDDGGSSKGSKVVPGNGKKVTSKKN), and 397 to 588 (FSMI…ELPR). A compositionally biased stretch (low complexity) spans 102 to 111 (DVSSDSSVAK). Composition is skewed to basic and acidic residues over residues 155 to 168 (SKKDKSYKDDKEGA) and 195 to 204 (PLCEKEKSEE). Residues 352–363 (KGSKVVPGNGKK) are compositionally biased toward low complexity. 2 stretches are compositionally biased toward basic and acidic residues: residues 422–435 (REVKCSDSGRDRNT) and 450–469 (ERGDQNSKGNEKRQCHRNSD).

This sequence belongs to the Amer family.

It is found in the cell membrane. In terms of biological role, negative regulator of the canonical Wnt signaling pathway involved in neuroectodermal patterning. Acts by specifically binding phosphatidylinositol 4,5-bisphosphate (PtdIns(4,5)P2), translocating to the cell membrane and interacting with key regulators of the canonical Wnt signaling pathway, such as components of the beta-catenin destruction complex. The chain is APC membrane recruitment protein 2 (amer2) from Xenopus laevis (African clawed frog).